A 758-amino-acid chain; its full sequence is 5-methyltetrahydropteroyltriglutamate--homocysteine methyltransferase (758 aa).

5-methyltetrahydropteroyltri-L-glutamate is bound by residues 17–20 (RELK) and K117. Residues 434–436 (IGS) and E487 contribute to the L-homocysteine site. Residues 434–436 (IGS) and E487 contribute to the L-methionine site. Residues 518 to 519 (RC) and W564 each bind 5-methyltetrahydropteroyltri-L-glutamate. D602 lines the L-homocysteine pocket. Residue D602 coordinates L-methionine. E608 contacts 5-methyltetrahydropteroyltri-L-glutamate. Residues H644, C646, and E668 each contribute to the Zn(2+) site. The active-site Proton donor is H697. C729 contacts Zn(2+).

It belongs to the vitamin-B12 independent methionine synthase family. Requires Zn(2+) as cofactor.

The catalysed reaction is 5-methyltetrahydropteroyltri-L-glutamate + L-homocysteine = tetrahydropteroyltri-L-glutamate + L-methionine. Its pathway is amino-acid biosynthesis; L-methionine biosynthesis via de novo pathway; L-methionine from L-homocysteine (MetE route): step 1/1. Functionally, catalyzes the transfer of a methyl group from 5-methyltetrahydrofolate to homocysteine resulting in methionine formation. This chain is 5-methyltetrahydropteroyltriglutamate--homocysteine methyltransferase, found in Serratia proteamaculans (strain 568).